Here is a 152-residue protein sequence, read N- to C-terminus: Methylglyoxal synthase (152 aa).

The region spanning 6–152 is the MGS-like domain; the sequence is RKISARKSIA…YDGYLAERLA (147 aa). Substrate contacts are provided by residues H19, K23, 45–48, and 65–66; these read TGTT and SG. D71 serves as the catalytic Proton donor/acceptor. H98 lines the substrate pocket.

This sequence belongs to the methylglyoxal synthase family.

It catalyses the reaction dihydroxyacetone phosphate = methylglyoxal + phosphate. In terms of biological role, catalyzes the formation of methylglyoxal from dihydroxyacetone phosphate. This chain is Methylglyoxal synthase, found in Actinobacillus pleuropneumoniae serotype 3 (strain JL03).